Consider the following 781-residue polypeptide: Mitochondrial inner membrane m-AAA protease component paraplegin (781 aa).

The N-terminal 43 residues, 1 to 43 (MAAALLLLRGLRPGPEPRPRRLWGLLSGRGPGLSSGAGARRPY), are a transit peptide targeting the mitochondrion. Disordered stretches follow at residues 22–56 (LWGL…AAAG) and 103–135 (TSRM…ERED). Positions 36–56 (GAGARRPYAARGTPVGPAAAG) are enriched in low complexity. A propeptide spans 44–105 (AARGTPVGPA…GSTLYFNTSR (62 aa)) (removed in mature form). At 106-144 (MKQKNKDNDKPKGKTPEDDEEEKRRKEREDQMYRERLRT) the chain is on the mitochondrial matrix side. Basic and acidic residues predominate over residues 109 to 135 (KNKDNDKPKGKTPEDDEEEKRRKERED). A helical membrane pass occupies residues 145–165 (LFIIALVMSLLNSLSTSGGSI). Residues 166 to 248 (SWADFVNEML…DRIPVSYKRT (83 aa)) lie on the Mitochondrial intermembrane side of the membrane. Residues 249-269 (GFFGNALYALGMTAVGLAILW) form a helical membrane-spanning segment. Residues 270-781 (YVFRLAGMTG…ASGEEEAPAP (512 aa)) are Mitochondrial matrix-facing. The ATP site is built by Ala-312, Gly-352, Cys-353, Gly-354, Lys-355, Thr-356, and Leu-357. Residue Tyr-505 is modified to 3'-nitrotyrosine. Residue His-574 coordinates Zn(2+). Glu-575 is an active-site residue. 2 residues coordinate Zn(2+): His-578 and Asp-650. The interval 701-781 (HEAKLLVAKA…ASGEEEAPAP (81 aa)) is interaction with PPIF.

This sequence in the N-terminal section; belongs to the AAA ATPase family. The protein in the C-terminal section; belongs to the peptidase M41 family. As to quaternary structure, forms heterohexamers with SPG7 and AFG3L1. The m-AAA protease is either composed of homohexamers of AFG3L2 or heterohexamers of AFG3L1, AFG3L2 and/or SPG7. Component of the mitochondrial permeability transition pore complex (mPTPC), at least composed of SPG7, VDAC1 and PPIF. Interacts with MAIP1. It depends on Zn(2+) as a cofactor. Upon import into the mitochondrion, the N-terminal transit peptide is cleaved by the mitochondrial-processing peptidase (MPP) to generate an intermediate form which undergoes a second proteolytic cleavage mediated by proteases AFG3L1 and/or AFG3L2 removing an additional N-terminal fragment to generate the proteolytically active mature form. As to expression, expressed in the brain and retina (at protein level).

The protein localises to the mitochondrion inner membrane. The catalysed reaction is ATP + H2O = ADP + phosphate + H(+). Catalytic component of the m-AAA protease, a protease that plays a key role in proteostasis of inner mitochondrial membrane proteins, and which is essential for axonal and neuron development. SPG7 possesses both ATPase and protease activities: the ATPase activity is required to unfold substrates, threading them into the internal proteolytic cavity for hydrolysis into small peptide fragments. The m-AAA protease exerts a dual role in the mitochondrial inner membrane: it mediates the processing of specific regulatory proteins and ensures protein quality control by degrading misfolded polypeptides. Mediates protein maturation of the mitochondrial ribosomal subunit MRPL32/bL32m by catalyzing the cleavage of the presequence of MRPL32/bL32m prior to assembly into the mitochondrial ribosome. Acts as a regulator of calcium in neurons by mediating degradation of SMDT1/EMRE before its assembly with the uniporter complex, limiting the availability of SMDT1/EMRE for MCU assembly and promoting efficient assembly of gatekeeper subunits with MCU. Also regulates mitochondrial calcium by catalyzing degradation of MCU. Plays a role in the formation and regulation of the mitochondrial permeability transition pore (mPTP) and its proteolytic activity is dispensable for this function. This is Mitochondrial inner membrane m-AAA protease component paraplegin from Mus musculus (Mouse).